The sequence spans 257 residues: NAD kinase (257 aa).

D46 functions as the Proton acceptor in the catalytic mechanism. Residues 46–47 (DG), 116–117 (NE), D146, A154, and 157–162 (TAYNLS) each bind NAD(+).

Belongs to the NAD kinase family. A divalent metal cation serves as cofactor.

The protein localises to the cytoplasm. The catalysed reaction is NAD(+) + ATP = ADP + NADP(+) + H(+). Functionally, involved in the regulation of the intracellular balance of NAD and NADP, and is a key enzyme in the biosynthesis of NADP. Catalyzes specifically the phosphorylation on 2'-hydroxyl of the adenosine moiety of NAD to yield NADP. This chain is NAD kinase, found in Mesorhizobium japonicum (strain LMG 29417 / CECT 9101 / MAFF 303099) (Mesorhizobium loti (strain MAFF 303099)).